Consider the following 81-residue polypeptide: Cytotoxin 5b (81 aa).

An N-terminal signal peptide occupies residues 1 to 21; it reads MKTLLLTLLVVTIVCLDLGYT. 4 disulfides stabilise this stretch: C24–C42, C35–C59, C63–C74, and C75–C80.

The protein belongs to the three-finger toxin family. Short-chain subfamily. Type IA cytotoxin sub-subfamily. As to quaternary structure, monomer in solution; Homodimer and oligomer in the presence of negatively charged lipids forming a pore with a size ranging between 20 and 30 Angstroms. As to expression, expressed by the venom gland.

It is found in the secreted. The protein resides in the target cell membrane. Its function is as follows. Shows cytolytic activity on many different cells by forming pore in lipid membranes. In vivo, increases heart rate or kills the animal by cardiac arrest. In addition, it binds to heparin with high affinity, interacts with Kv channel-interacting protein 1 (KCNIP1) in a calcium-independent manner, and binds to integrin alpha-V/beta-3 (ITGAV/ITGB3) with moderate affinity. The chain is Cytotoxin 5b from Naja sputatrix (Malayan spitting cobra).